The sequence spans 456 residues: ATP-dependent protease ATPase subunit HslU (456 aa).

Residues Ile18, 60–65 (GVGKTE), Asp270, Glu334, and Arg406 contribute to the ATP site.

It belongs to the ClpX chaperone family. HslU subfamily. A double ring-shaped homohexamer of HslV is capped on each side by a ring-shaped HslU homohexamer. The assembly of the HslU/HslV complex is dependent on binding of ATP.

Its subcellular location is the cytoplasm. Its function is as follows. ATPase subunit of a proteasome-like degradation complex; this subunit has chaperone activity. The binding of ATP and its subsequent hydrolysis by HslU are essential for unfolding of protein substrates subsequently hydrolyzed by HslV. HslU recognizes the N-terminal part of its protein substrates and unfolds these before they are guided to HslV for hydrolysis. This chain is ATP-dependent protease ATPase subunit HslU, found in Exiguobacterium sibiricum (strain DSM 17290 / CCUG 55495 / CIP 109462 / JCM 13490 / 255-15).